Reading from the N-terminus, the 428-residue chain is Light-independent protochlorophyllide reductase subunit N (428 aa).

Residues cysteine 31, cysteine 56, and cysteine 117 each contribute to the [4Fe-4S] cluster site.

It belongs to the BchN/ChlN family. In terms of assembly, protochlorophyllide reductase is composed of three subunits; BchL, BchN and BchB. Forms a heterotetramer of two BchB and two BchN subunits. [4Fe-4S] cluster is required as a cofactor.

It carries out the reaction chlorophyllide a + oxidized 2[4Fe-4S]-[ferredoxin] + 2 ADP + 2 phosphate = protochlorophyllide a + reduced 2[4Fe-4S]-[ferredoxin] + 2 ATP + 2 H2O. The protein operates within porphyrin-containing compound metabolism; bacteriochlorophyll biosynthesis (light-independent). In terms of biological role, component of the dark-operative protochlorophyllide reductase (DPOR) that uses Mg-ATP and reduced ferredoxin to reduce ring D of protochlorophyllide (Pchlide) to form chlorophyllide a (Chlide). This reaction is light-independent. The NB-protein (BchN-BchB) is the catalytic component of the complex. This is Light-independent protochlorophyllide reductase subunit N from Rhodopseudomonas palustris (strain BisB5).